The sequence spans 1637 residues: Probable serine/threonine-protein kinase gdt2 (1637 aa).

An N-terminal signal peptide occupies residues 1 to 19; sequence MNYILYILLILIIFSINNT. The Extracellular portion of the chain corresponds to 20 to 896; that stretch reads FSIGSFVYTP…IPVEKINLLP (877 aa). A helical membrane pass occupies residues 897–917; it reads IIVPICVTVLVLLSILIVFFG. Residues 918–1637 are Cytoplasmic-facing; sequence ARYYKHKKRR…NNNNNNNNNN (720 aa). Over residues 977–990 the composition is skewed to polar residues; sequence SDIQTQSENNNLEP. The interval 977–1000 is disordered; sequence SDIQTQSENNNLEPTTVETTTTTT. The span at 991–1000 shows a compositional bias: low complexity; it reads TTVETTTTTT. A Protein kinase domain is found at 1290–1547; the sequence is IIIKNYISEG…LSKYLKHLLK (258 aa). Residues 1296 to 1304 and lysine 1317 contribute to the ATP site; that span reads ISEGTFGIV. Aspartate 1408 acts as the Proton acceptor in catalysis. The segment at 1557–1637 is disordered; that stretch reads DKDKKNKKKN…NNNNNNNNNN (81 aa). Low complexity-rich tracts occupy residues 1568 to 1589 and 1597 to 1637; these read NNNNNNNNNNNNNNNNNNNNNN and NNNI…NNNN.

This sequence in the N-terminal section; belongs to the GDT family. It in the C-terminal section; belongs to the protein kinase superfamily. TKL Ser/Thr protein kinase family.

The protein localises to the membrane. The enzyme catalyses L-seryl-[protein] + ATP = O-phospho-L-seryl-[protein] + ADP + H(+). It carries out the reaction L-threonyl-[protein] + ATP = O-phospho-L-threonyl-[protein] + ADP + H(+). Its function is as follows. Regulates the transition between growth and differentiation. In Dictyostelium discoideum (Social amoeba), this protein is Probable serine/threonine-protein kinase gdt2 (gdt2).